A 207-amino-acid polypeptide reads, in one-letter code: Small ribosomal subunit protein uS4 (207 aa).

Residues Ser97–Leu160 enclose the S4 RNA-binding domain.

The protein belongs to the universal ribosomal protein uS4 family. In terms of assembly, part of the 30S ribosomal subunit. Contacts protein S5. The interaction surface between S4 and S5 is involved in control of translational fidelity.

Functionally, one of the primary rRNA binding proteins, it binds directly to 16S rRNA where it nucleates assembly of the body of the 30S subunit. Its function is as follows. With S5 and S12 plays an important role in translational accuracy. This chain is Small ribosomal subunit protein uS4, found in Burkholderia mallei (strain NCTC 10247).